A 362-amino-acid polypeptide reads, in one-letter code: MAFQFNFSIEEDLENKLTSLDDGTCVLESQKGKQDKRQSTERPGLPRDHSWKCSSLGNAASSEDTGSPPPIADRSDDPEACKHQPSWKPAKEHVMPKDVNHVLENTVLEMLPGPQHANTAVVKTVSLKEKFPGENIVSKSFSSHSDLIPGVYEGGLKIWECTFDLLTYFTKAKVKFAGQKVLDLGCGSGLLGITASKGGAREVHFQDYNGLVIDEVTLPNVVANVPLQDDSNGKNEPDGKRQRKSEVGREICKCRLFSGEWAEFCKLVLREKLFVKYDLILTSETIYNPDYYSTLHETFLRLLSRSGRVLLASKAHYFGVGGGVHLFQKFVEEKGVFETRTLEVIDEGLKRFLMEMTFKHPS.

The disordered stretch occupies residues 18-88 (TSLDDGTCVL…EACKHQPSWK (71 aa)). The span at 30–51 (QKGKQDKRQSTERPGLPRDHSW) shows a compositional bias: basic and acidic residues. Residues 52-65 (KCSSLGNAASSEDT) are compositionally biased toward polar residues. Phosphoserine is present on residues S62 and S67. A compositionally biased stretch (basic and acidic residues) spans 73–82 (DRSDDPEACK). Tele-methylhistidine is present on H144. S-adenosyl-L-methionine contacts are provided by residues 158–162 (IWECT), G185, and 206–208 (QDY). The Nuclear localization signal signature appears at 237-243 (PDGKRQR). S-adenosyl-L-methionine contacts are provided by residues 259–261 (GEW) and S283.

Belongs to the methyltransferase superfamily. METTL18 family. As to quaternary structure, interacts with GRWD1 and members of the heat shock protein 90 and 70 families; these proteins may possibly be methylation substrates for the enzyme. In terms of processing, monomethylated at His-144 through automethylation. Automethylation at His-144 positively regulates the methyltransferase activity toward RPL3. Probably methylated on other residues.

It localises to the cytoplasm. It is found in the cytosol. The protein resides in the nucleus. The protein localises to the nucleolus. It carries out the reaction L-histidyl-[protein] + S-adenosyl-L-methionine = N(tele)-methyl-L-histidyl-[protein] + S-adenosyl-L-homocysteine + H(+). Protein-L-histidine N-tele-methyltransferase that specifically monomethylates RPL3, thereby regulating translation elongation. Histidine methylation of RPL3 regulates translation elongation by slowing ribosome traversal on tyrosine codons: slower elongation provides enough time for proper folding of synthesized proteins and prevents cellular aggregation of tyrosine-rich proteins. This Mus musculus (Mouse) protein is Histidine protein methyltransferase 1 homolog.